The primary structure comprises 449 residues: MAQFFKAKPNSSKQLSAKQSFSVHQLDHLGAGIAQHQGKVVFIPGALPSETVQAQLTEQKKNYARAKLIKVETPSAERVTPLCPHYQSCGGCDLQHMSLAGQREHKSAALVDIMAKFAGAEGNSVPALTGEGWHYRRRARLATLFDKNTKQLSLGFRASSSNQVVPIDSCLVLAKPLSDLIAPFAKLLNQLAAKSSLGHLELIDADNGHFAVIRITKSLNDKDMAKLAQFAEQHQIHICLQDNNGEFHGVNGTLLLPVYQLLDDKADATPVSLTFTPGNFVQVNAQINKAMVAQALDWLAPQPGERILDLFCGMGNFSLPLAKLGAEVIGVEGVPEMVSQARENAAANGLSNLTFYHGDLSADLSCEPWMGKIDKLLLDPARAGAFESLQWLKKMKPRQVVYVSCNPASLARDSAVLLERGYKLQKLGLIDMFPQTHHIEAMALFELAK.

The region spanning 12–70 (SKQLSAKQSFSVHQLDHLGAGIAQHQGKVVFIPGALPSETVQAQLTEQKKNYARAKLIK) is the TRAM domain. Positions 83, 89, 92, and 170 each coordinate [4Fe-4S] cluster. Residues Gln282, Phe311, Asn316, Glu332, Asp359, and Asp379 each coordinate S-adenosyl-L-methionine. Cys405 acts as the Nucleophile in catalysis.

Belongs to the class I-like SAM-binding methyltransferase superfamily. RNA M5U methyltransferase family. RlmD subfamily.

The enzyme catalyses uridine(1939) in 23S rRNA + S-adenosyl-L-methionine = 5-methyluridine(1939) in 23S rRNA + S-adenosyl-L-homocysteine + H(+). In terms of biological role, catalyzes the formation of 5-methyl-uridine at position 1939 (m5U1939) in 23S rRNA. This Shewanella sp. (strain MR-7) protein is 23S rRNA (uracil(1939)-C(5))-methyltransferase RlmD.